The primary structure comprises 353 residues: Glutamine synthetase cytosolic isozyme 1-5 (353 aa).

The residue at position 2 (T2) is an N-acetylthreonine. S3 is subject to Phosphoserine. A GS beta-grasp domain is found at 19–99 (IIAEYIWIGG…VMCDAYRPAG (81 aa)). The region spanning 106 to 353 (NRHKAVKIFD…TSMIAETTIL (248 aa)) is the GS catalytic domain.

It belongs to the glutamine synthetase family. As to quaternary structure, homooctamer. Not expressed in roots.

It localises to the cytoplasm. It carries out the reaction L-glutamate + NH4(+) + ATP = L-glutamine + ADP + phosphate + H(+). This is Glutamine synthetase cytosolic isozyme 1-5 (GLN1-5) from Arabidopsis thaliana (Mouse-ear cress).